The sequence spans 208 residues: Apoptosis inhibitor 193R (208 aa).

Residues 1–25 form a disordered region; it reads MDTCGIYNSDNEEFSQENDGENDGG. Residues 10-23 are compositionally biased toward acidic residues; it reads DNEEFSQENDGEND. A BIR repeat occupies 37 to 108; sequence YDERLNSFQN…QDLKINCLFV (72 aa). Zn(2+) contacts are provided by Cys74, Cys77, His94, and Cys105. Tandem repeats lie at residues 134–139, 140–145, and 146–151. The segment at 134–151 is 3 X 6 AA tandem repeats; that stretch reads NQDLDHNQDLDHNQDLDQ. An RING-type zinc finger spans residues 163 to 197; sequence CKICFTNKITKVLIPCGHSSCYECVFKLQTCPICK.

Belongs to the IIV-6 193R family.

In terms of biological role, plays a role early in infection by preventing host cell apoptosis. This chain is Apoptosis inhibitor 193R, found in Invertebrate iridescent virus 6 (IIV-6).